Reading from the N-terminus, the 129-residue chain is Gas vesicle protein C (129 aa).

Repeats lie at residues valine 19–phenylalanine 51, histidine 52–phenylalanine 84, and histidine 85–phenylalanine 117. The 3 X 33 AA tandem repeats stretch occupies residues valine 19–phenylalanine 117.

The protein belongs to the gas vesicle GvpC family.

The protein resides in the gas vesicle. Functionally, confers stability, involved in shaping gas vesicles, hollow, gas filled proteinaceous nanostructures. During planktonic growth they allow positioning of the organism at a favorable depth for light or nutrient acquisition. In terms of biological role, cluster expression in E.coli (gvpA1-gvpA2-gvpC-gvpN-gvpJ-gvpK-gvpF-gvpG-gvpV-gvpW) allows cells to float and produces irregularly shaped gas vesicles. This chain is Gas vesicle protein C, found in Nostoc sp. (strain PCC 7120 / SAG 25.82 / UTEX 2576).